Reading from the N-terminus, the 370-residue chain is DNA replication and repair protein RecF (370 aa).

ATP is bound at residue 30 to 37 (GQNGMGKT).

The protein belongs to the RecF family.

The protein resides in the cytoplasm. Functionally, the RecF protein is involved in DNA metabolism; it is required for DNA replication and normal SOS inducibility. RecF binds preferentially to single-stranded, linear DNA. It also seems to bind ATP. In Bacteroides fragilis (strain YCH46), this protein is DNA replication and repair protein RecF.